Reading from the N-terminus, the 914-residue chain is Solute carrier family 12 member 9 (914 aa).

Over 1–36 (MASENSPLLAYRLLGEEGAAFPPNGAGGSGVASARK) the chain is Cytoplasmic. S6 carries the post-translational modification Phosphoserine. A helical membrane pass occupies residues 37–57 (LSTFLGVVVPTVLSMFSIVVF). Over 58–72 (LRIGFVVGHAGLLQA) the chain is Extracellular. A helical transmembrane segment spans residues 73–93 (LAMLLVAYVILALTVLSVCAI). Residues 94–119 (ATNGAVRGGGAYFMISRTLGPEVGGS) are Cytoplasmic-facing. The chain crosses the membrane as a helical span at residues 120-140 (IGLMFYLANVCGCAVSLLGLV). The Extracellular segment spans residues 141 to 167 (ESILDVFGADVTGSSGIKVLPQGYGWN). Residues 168 to 188 (LLYGSLLLGLVGGVCALGAGL) form a helical membrane-spanning segment. Residues 189–193 (YARAS) are Cytoplasmic-facing. Residues 194-214 (FLTFLLVSGSLASVLVSFVAV) traverse the membrane as a helical segment. The Extracellular portion of the chain corresponds to 215–262 (GPRNITLAPRPGTNGSSVPPRHGHFTGFNGSTLKDNLGAGYAEDYTTG). N-linked (GlcNAc...) asparagine glycans are attached at residues N218, N228, and N243. Residues 263-283 (AMMTFASVFAVLFNGCTGIMA) traverse the membrane as a helical segment. The Cytoplasmic portion of the chain corresponds to 284–297 (GANMSGELKDPSRA). A helical transmembrane segment spans residues 298–318 (IPLGTIIAVAYTFFIYILLFF). The Extracellular segment spans residues 319 to 338 (LSSFTCDRALLQGDYGFFRD). The chain crosses the membrane as a helical span at residues 339-359 (ISLWPPLVLIGIYATALSASM). The Cytoplasmic portion of the chain corresponds to 360 to 376 (SSLIGASRILHALAQDD). The chain crosses the membrane as a helical span at residues 377-399 (LFGVILAPAKVVSGGGNPWGAVL). Topologically, residues 400 to 416 (YSWGLVQLVLLAGKLNT) are extracellular. Residues 417 to 437 (LAAVVTVFYLVAYAAVDLSCL) traverse the membrane as a helical segment. At 438–466 (SLEWASAPNFRPTFSLFSWHTCLLGVASC) the chain is on the cytoplasmic side. The chain crosses the membrane as a helical span at residues 467–487 (LLMMFLISPGAAGGSLLLMGL). Topologically, residues 488-740 (LSALLTARGG…LLRPRGGPGY (253 aa)) are extracellular. Residues 645–678 (PAFSEPAEGTREGGSPALSTLFPPPRAPGSPRAL) form a disordered region. Residues 741–761 (VDVCGLFLLQMATILSMVPAW) form a helical membrane-spanning segment. At 762–914 (HSARLRIFLC…GVTPVTCTDL (153 aa)) the chain is on the cytoplasmic side. The tract at residues 843–864 (QQGRGTGGGPGGPEGRDGEEGP) is disordered. The segment covering 846 to 855 (RGTGGGPGGP) has biased composition (gly residues).

The protein belongs to the SLC12A transporter family. Interacts with SLC12A1.

It localises to the cell membrane. The protein localises to the lysosome membrane. In terms of biological role, may be an inhibitor of SLC12A1. Seems to correspond to a subunit of a multimeric transport system and thus, additional subunits may be required for its function. May play a role in lysosomal ion flux and osmoregulation. This chain is Solute carrier family 12 member 9 (Slc12a9), found in Rattus norvegicus (Rat).